The primary structure comprises 256 residues: tRNA pseudouridine synthase A (256 aa).

D55 acts as the Nucleophile in catalysis. A substrate-binding site is contributed by Y113.

Belongs to the tRNA pseudouridine synthase TruA family. As to quaternary structure, homodimer.

It catalyses the reaction uridine(38/39/40) in tRNA = pseudouridine(38/39/40) in tRNA. Its function is as follows. Formation of pseudouridine at positions 38, 39 and 40 in the anticodon stem and loop of transfer RNAs. In Ligilactobacillus salivarius (strain UCC118) (Lactobacillus salivarius), this protein is tRNA pseudouridine synthase A.